Reading from the N-terminus, the 897-residue chain is Translation initiation factor IF-2 (897 aa).

Disordered stretches follow at residues Arg-69–Gln-88 and Arg-95–Lys-304. The span at Ser-101 to Gln-161 shows a compositional bias: basic and acidic residues. Positions Lys-162–Gln-179 are enriched in low complexity. Basic and acidic residues-rich tracts occupy residues Glu-180–Gln-196, Lys-203–Val-217, Trp-226–Asp-239, and Arg-277–Asn-286. A compositionally biased stretch (basic residues) spans Pro-287–Lys-296. The tr-type G domain occupies Pro-397–Lys-566. The interval Gly-406–Thr-413 is G1. Gly-406–Thr-413 is a binding site for GTP. Residues Gly-431 to His-435 are G2. Positions Asp-452–Gly-455 are G3. GTP contacts are provided by residues Asp-452–His-456 and Asn-506–Asp-509. Residues Asn-506–Asp-509 form a G4 region. Positions Ser-542–Lys-544 are G5.

The protein belongs to the TRAFAC class translation factor GTPase superfamily. Classic translation factor GTPase family. IF-2 subfamily.

The protein resides in the cytoplasm. One of the essential components for the initiation of protein synthesis. Protects formylmethionyl-tRNA from spontaneous hydrolysis and promotes its binding to the 30S ribosomal subunits. Also involved in the hydrolysis of GTP during the formation of the 70S ribosomal complex. This Aeromonas hydrophila subsp. hydrophila (strain ATCC 7966 / DSM 30187 / BCRC 13018 / CCUG 14551 / JCM 1027 / KCTC 2358 / NCIMB 9240 / NCTC 8049) protein is Translation initiation factor IF-2.